Consider the following 256-residue polypeptide: Gluconate 5-dehydrogenase (256 aa).

Leu15–Val39 lines the NADP(+) pocket. Substrate is bound at residue Ser147. The active-site Proton acceptor is the Tyr160.

This sequence belongs to the short-chain dehydrogenases/reductases (SDR) family. As to quaternary structure, homodimer.

The protein resides in the cytoplasm. The enzyme catalyses D-gluconate + NADP(+) = 5-dehydro-D-gluconate + NADPH + H(+). Catalyzes the reversible NADP-dependent oxidation of gluconate to 5-ketogluconate. Is involved in the non-phosphorylative, ketogenic oxidation of glucose. Is almost inactive with NAD as cosubstrate. Displays high substrate specificity since D-Glucose, D-sorbitol, and D-mannitol are not oxidized by the enzyme, and 2-ketogluconate and L-sorbose are not reduced. Can accept D-fructose as a substrate, with a rate that is only 10% of the rate of 5-ketogluconate reduction. The protein is Gluconate 5-dehydrogenase of Gluconobacter oxydans (strain 621H) (Gluconobacter suboxydans).